The primary structure comprises 408 residues: MSLSVTRENFDEWMVPVYVPAPFIPVRGEGSRLWDQQGKEYIDFAGGIAVNALGHAHPALREALNEQANRFWHIGNGYTNEPALRLAKKLIDATFAERVFFCNSGAEANEAALKLARKYAHDRVGNHKSGIVAFKNAFHGRTLFTVSAGGQPTYSQDFAPLPPDIRHAAYNDLNSASALIDDNTCAVIVEPVQGEGGVIPATKAFLQGLRELCDRHQALLIFDEVQTGVGRTGELYAYMHYGVTPDILTTAKALGGGFPIGAMLTTQDYASVMTPGTHGTTYGGNPLATAVAGKVLDIINTPEMQNGVRQRHDAFIERLNTLNVRFGMFSEIRGLGLLLGCVLQTEFAGKAKLIAQEAAKAGVMVLIAGGDVVRFAPALNVSDEEIATGLDRFALACERLQTGGVPCG.

Residue K252 is modified to N6-(pyridoxal phosphate)lysine.

The protein belongs to the class-III pyridoxal-phosphate-dependent aminotransferase family. AstC subfamily. Requires pyridoxal 5'-phosphate as cofactor.

It carries out the reaction N(2)-succinyl-L-ornithine + 2-oxoglutarate = N-succinyl-L-glutamate 5-semialdehyde + L-glutamate. Its pathway is amino-acid degradation; L-arginine degradation via AST pathway; L-glutamate and succinate from L-arginine: step 3/5. Functionally, catalyzes the transamination of N(2)-succinylornithine and alpha-ketoglutarate into N(2)-succinylglutamate semialdehyde and glutamate. Can also act as an acetylornithine aminotransferase. The protein is Succinylornithine transaminase of Salmonella typhimurium (strain LT2 / SGSC1412 / ATCC 700720).